Here is a 277-residue protein sequence, read N- to C-terminus: MRTLILLGILGATMSAPLIPQHLMSASNSNELLLNLNNAQLRPLQLQGPFNSWFPPFPGILQQQQQNQVPGLSPFSLSTREWFAGLVPNQIFVPGQVSFAQGTQAGQLDPSQPQTPQQTQRGPKNVMPSVFFKMPQEQAQMLQYYPVYMFLPWEQPQQTVAQSPPQTREQLFEKQMPFYTEFGYIPQQVEPVMPVEQQQPVFDPFLGTAPEIAAMPAEVSPYLQKEMINFQHTNAGIFIPSTSQKPSTTIFFTSAVDPIITRELTEKKAKTDSLKEP.

The first 15 residues, 1 to 15, serve as a signal peptide directing secretion; that stretch reads MRTLILLGILGATMS. The tract at residues 103-124 is disordered; it reads TQAGQLDPSQPQTPQQTQRGPK. Thr115 carries an O-linked (GalNAc...) threonine glycan. Residues 127–129 form an interaction with ARHGEF5 region; sequence MPS. Thr208, Thr248, and Thr271 each carry an O-linked (GalNAc...) threonine glycan.

It belongs to the ODAM family. Interacts (via C-terminus) with ARHGEF5. O-glycosylated.

The protein localises to the secreted. Its subcellular location is the cytoplasm. The protein resides in the nucleus. Tooth-associated epithelia protein that probably plays a role in odontogenesis, the complex process that results in the initiation and generation of the tooth. May be incorporated in the enamel matrix at the end of mineralization process. Involved in the induction of RHOA activity via interaction with ARHGEF and expression of downstream factors such as ROCK. Plays a role in attachment of the junctional epithelium to the tooth surface. The chain is Odontogenic ameloblast-associated protein (ODAM) from Bos taurus (Bovine).